Here is a 182-residue protein sequence, read N- to C-terminus: Alpha-S2-casein (182 aa).

An N-terminal signal peptide occupies residues 1–15 (MKFFIFTCLLAVALA). Phosphoserine occurs at positions 22, 23, and 24.

Belongs to the alpha-casein family. Mammary gland specific. Secreted in milk.

The protein localises to the secreted. In terms of biological role, important role in the capacity of milk to transport calcium phosphate. The polypeptide is Alpha-S2-casein (CSN1S2) (Oryctolagus cuniculus (Rabbit)).